A 113-amino-acid chain; its full sequence is Large ribosomal subunit protein bL17 (113 aa).

Belongs to the bacterial ribosomal protein bL17 family. Part of the 50S ribosomal subunit. Contacts protein L32.

The sequence is that of Large ribosomal subunit protein bL17 from Clostridium kluyveri (strain NBRC 12016).